We begin with the raw amino-acid sequence, 204 residues long: Probable nicotinate-nucleotide adenylyltransferase (204 aa).

This sequence belongs to the NadD family.

The catalysed reaction is nicotinate beta-D-ribonucleotide + ATP + H(+) = deamido-NAD(+) + diphosphate. The protein operates within cofactor biosynthesis; NAD(+) biosynthesis; deamido-NAD(+) from nicotinate D-ribonucleotide: step 1/1. Its function is as follows. Catalyzes the reversible adenylation of nicotinate mononucleotide (NaMN) to nicotinic acid adenine dinucleotide (NaAD). This chain is Probable nicotinate-nucleotide adenylyltransferase, found in Methylacidiphilum infernorum (isolate V4) (Methylokorus infernorum (strain V4)).